The sequence spans 158 residues: MRKAKPKKRVILPDPVFNDQKVSKFVNHLMYDGKKNTSYEIFYAALETVKTKLPNEEKSALEIWKKALDNVTPQIEVKSRRVGGATFQVPTEIRPDRKESISMKNLILFARKRGGKSMADKLAAEIIDAFNEQGGAYKRKEDMHRMAEANRAFAHFRF.

It belongs to the universal ribosomal protein uS7 family. Part of the 30S ribosomal subunit. Contacts proteins S9 and S11.

In terms of biological role, one of the primary rRNA binding proteins, it binds directly to 16S rRNA where it nucleates assembly of the head domain of the 30S subunit. Is located at the subunit interface close to the decoding center, probably blocks exit of the E-site tRNA. This Phocaeicola vulgatus (strain ATCC 8482 / DSM 1447 / JCM 5826 / CCUG 4940 / NBRC 14291 / NCTC 11154) (Bacteroides vulgatus) protein is Small ribosomal subunit protein uS7.